A 265-amino-acid chain; its full sequence is 3-methyl-2-oxobutanoate hydroxymethyltransferase (265 aa).

The Mg(2+) site is built by Asp44 and Asp83. 3-methyl-2-oxobutanoate contacts are provided by residues 44-45 (DS), Asp83, and Lys113. Glu115 is a Mg(2+) binding site. The Proton acceptor role is filled by Glu183.

Belongs to the PanB family. Homodecamer; pentamer of dimers. It depends on Mg(2+) as a cofactor.

It localises to the cytoplasm. The enzyme catalyses 3-methyl-2-oxobutanoate + (6R)-5,10-methylene-5,6,7,8-tetrahydrofolate + H2O = 2-dehydropantoate + (6S)-5,6,7,8-tetrahydrofolate. Its pathway is cofactor biosynthesis; (R)-pantothenate biosynthesis; (R)-pantoate from 3-methyl-2-oxobutanoate: step 1/2. Its function is as follows. Catalyzes the reversible reaction in which hydroxymethyl group from 5,10-methylenetetrahydrofolate is transferred onto alpha-ketoisovalerate to form ketopantoate. The chain is 3-methyl-2-oxobutanoate hydroxymethyltransferase from Leptospira borgpetersenii serovar Hardjo-bovis (strain JB197).